The chain runs to 567 residues: tRNA (uracil-O(2)-)-methyltransferase (567 aa).

Serine 107 bears the Phosphoserine mark.

Belongs to the TRM44 family.

Its subcellular location is the cytoplasm. It carries out the reaction uridine(44) in tRNA(Ser) + S-adenosyl-L-methionine = 2'-O-methyluridine(44) in tRNA(Ser) + S-adenosyl-L-homocysteine + H(+). Its function is as follows. tRNA (uracil-O(2)-)-methyltransferase, which catalyzes the formation of O(2)-methyluracil at position 44 (Um44) in tRNA(Ser). This Saccharomyces cerevisiae (strain ATCC 204508 / S288c) (Baker's yeast) protein is tRNA (uracil-O(2)-)-methyltransferase (TRM44).